Here is a 392-residue protein sequence, read N- to C-terminus: Chorismate synthase (392 aa).

Residues R40 and R46 each coordinate NADP(+). FMN contacts are provided by residues 135 to 137 (RAS), 256 to 257 (QA), G300, 315 to 319 (KPIST), and R341.

It belongs to the chorismate synthase family. As to quaternary structure, homotetramer. Requires FMNH2 as cofactor.

The catalysed reaction is 5-O-(1-carboxyvinyl)-3-phosphoshikimate = chorismate + phosphate. It participates in metabolic intermediate biosynthesis; chorismate biosynthesis; chorismate from D-erythrose 4-phosphate and phosphoenolpyruvate: step 7/7. Its function is as follows. Catalyzes the anti-1,4-elimination of the C-3 phosphate and the C-6 proR hydrogen from 5-enolpyruvylshikimate-3-phosphate (EPSP) to yield chorismate, which is the branch point compound that serves as the starting substrate for the three terminal pathways of aromatic amino acid biosynthesis. This reaction introduces a second double bond into the aromatic ring system. The chain is Chorismate synthase from Acidothermus cellulolyticus (strain ATCC 43068 / DSM 8971 / 11B).